Reading from the N-terminus, the 245-residue chain is Thiopurine S-methyltransferase (245 aa).

Residue 29–40 (WREKWVDGKIGF) coordinates S-adenosyl-L-methionine. Substrate is bound at residue phenylalanine 40. Position 58 is an N6-acetyllysine (lysine 58). Residues leucine 69, glutamate 90, and arginine 152 each coordinate S-adenosyl-L-methionine.

Belongs to the class I-like SAM-binding methyltransferase superfamily. TPMT family. As to quaternary structure, monomer.

The protein resides in the cytoplasm. The catalysed reaction is S-adenosyl-L-methionine + a thiopurine = S-adenosyl-L-homocysteine + a thiopurine S-methylether.. The chain is Thiopurine S-methyltransferase (TPMT) from Lynx rufus (Bobcat).